The following is a 509-amino-acid chain: Bestrophin-2a (509 aa).

Residues 1–31 lie on the Cytoplasmic side of the membrane; that stretch reads MTVTYTARVANARFGGFSQLLLLWRGSIYKL. Position 10 (Ala10) interacts with Ca(2+). Residues 32–51 form a helical membrane-spanning segment; that stretch reads LWRELLCFLGFYMALSAAYR. At 52 to 60 the chain is on the extracellular side; sequence FVLTEGQKR. Residues 61–82 traverse the membrane as a helical segment; sequence YFEKLVIYCDQYASLIPVSFVL. The Cytoplasmic portion of the chain corresponds to 83-238; that stretch reads GFYVTLVVNR…WISVPLVYTQ (156 aa). A helical membrane pass occupies residues 239–255; the sequence is VVTIALYSYFLACLIGR. Residues 256–274 lie on the Extracellular side of the membrane; the sequence is QFLDPAQGYKDHDLDLCVP. A helical transmembrane segment spans residues 275-288; the sequence is IFTLLQFFFYAGWL. Topologically, residues 289 to 509 are cytoplasmic; the sequence is KVAEQLINPF…PIGEEEENLA (221 aa). Residues Gln293, Asn296, Asp301, and Asp304 each coordinate Ca(2+). The disordered stretch occupies residues 454–509; that stretch reads DPGLPEPEAPPPAGPEPLTLIPGPVEPFSIVTMPGPRGPAPPWLPSPIGEEEENLA. Composition is skewed to pro residues over residues 457 to 468 and 489 to 498; these read LPEPEAPPPAGP and PRGPAPPWLP.

This sequence belongs to the anion channel-forming bestrophin (TC 1.A.46) family. Calcium-sensitive chloride channel subfamily. As to quaternary structure, pentamer. Interacts with GLUL; this interaction tethers a fraction of GLUL to the membrane, causing a decrease of cytosolic glutamine synthase (GS) activity and inhibits the chloride channel activity of BEST2 by affecting the gating at the aperture in the absence of intracellular glutamate. As to expression, mainly confined to the retinal pigment epithelium. Expressed in colon.

The protein resides in the cell membrane. The protein localises to the basolateral cell membrane. The enzyme catalyses chloride(in) = chloride(out). The catalysed reaction is hydrogencarbonate(in) = hydrogencarbonate(out). It catalyses the reaction L-glutamate(out) = L-glutamate(in). It carries out the reaction iodide(out) = iodide(in). The enzyme catalyses L-glutamine(out) = L-glutamine(in). With respect to regulation, chloride channel activity is allosterically inhibited by GLUL/glutamine synthase (GS) which affects the gating at the aperture in the absence of intracellular glutamate. Inhibitory effect of GLUL is relieved upon increasing of L-glutamate intracellular level. Ligand-gated anion channel that allows the movement of anions across cell membranes when activated by calcium (Ca2+). Transports a large specter of anions, namely mediates the movement of chloride, L-glutamate and iodide. Calcium-binding triggers the dilation of the aperture, but calcium-dependent gating is only effective when the size of the passing anion is bigger than the closed aperture. Mediates the calcium-activated hydrogencarbonate movement and participates in colonic hydrogencarbonate secretion concomitant with mucin secretion. In non-pigmented epithelium (NPE), mediates the efflux of intracellular L-glutamate; binding of intracellular L-glutamate activates and open both the neck and the aperture of the channel, leading to L-glutamate exit promoting chloride influx movement from the extracellular side in trans. Also exhibits a directional permeability for intracellular glutamine, in a similar manner as for L-glutamate. The polypeptide is Bestrophin-2a (Homo sapiens (Human)).